We begin with the raw amino-acid sequence, 136 residues long: Histone H3.3 (136 aa).

The tract at residues 1–42 is disordered; the sequence is MARTKQTARKSTGGKAPRKQLASKAARKSAPVSGGVKKPHRY. Residue Lys5 is modified to N6,N6,N6-trimethyllysine; alternate. N6,N6-dimethyllysine; alternate is present on Lys5. Residues Lys5 and Lys10 each carry the N6-methyllysine; alternate modification. Residue Lys10 is modified to N6-acetyllysine; alternate. Residue Ser11 is modified to Phosphoserine. Lys15 carries the post-translational modification N6,N6-dimethyllysine; alternate. An N6-acetyllysine; alternate mark is found at Lys15, Lys19, Lys24, Lys28, and Lys37. Lys19, Lys24, Lys28, and Lys37 each carry N6-methyllysine; alternate. N6,N6,N6-trimethyllysine; alternate is present on residues Lys28 and Lys37. 2 positions are modified to N6,N6-dimethyllysine; alternate: Lys28 and Lys37. N6-acetyllysine is present on residues Lys57 and Lys65. Residue Lys80 is modified to N6,N6,N6-trimethyllysine; alternate. Lys80 bears the N6,N6-dimethyllysine; alternate mark. Residue Lys80 is modified to N6-methyllysine; alternate.

The protein belongs to the histone H3 family. In terms of assembly, the nucleosome is a histone octamer containing two molecules each of H2A, H2B, H3 and H4 assembled in one H3-H4 heterotetramer and two H2A-H2B heterodimers. The octamer wraps approximately 147 bp of DNA. Phosphorylated by IPL1 to form H3S10ph. H3S10ph promotes subsequent H3K14ac formation by GCN5 and is required for transcriptional activation through TBP recruitment to the promoters. Post-translationally, mono-, di- and trimethylated by the COMPASS complex to form H3K4me1/2/3. H3K4me activates gene expression by regulating transcription elongation and plays a role in telomere length maintenance. H3K4me enrichment correlates with transcription levels, and occurs in a 5' to 3' gradient with H3K4me3 enrichment at the 5'-end of genes, shifting to H3K4me2 and then H3K4me1. Methylated by SET2 to form H3K36me. H3K36me represses gene expression. Methylated by DOT1 to form H3K79me. H3K79me is required for association of SIR proteins with telomeric regions and for telomeric silencing. The COMPASS-mediated formation of H3K4me2/3 and the DOT1-mediated formation of H3K79me require H2BK123ub1. In terms of processing, acetylation of histone H3 leads to transcriptional activation. H3K14ac formation by GCN5 is promoted by H3S10ph. H3K14ac can also be formed by ESA1. H3K56ac formation occurs predominantly in newly synthesized H3 molecules during G1, S and G2/M of the cell cycle and may be involved in DNA repair.

It is found in the nucleus. Its subcellular location is the chromosome. Its function is as follows. Core component of nucleosome. Nucleosomes wrap and compact DNA into chromatin, limiting DNA accessibility to the cellular machineries which require DNA as a template. Histones thereby play a central role in transcription regulation, DNA repair, DNA replication and chromosomal stability. DNA accessibility is regulated via a complex set of post-translational modifications of histones, also called histone code, and nucleosome remodeling. This Debaryomyces hansenii (strain ATCC 36239 / CBS 767 / BCRC 21394 / JCM 1990 / NBRC 0083 / IGC 2968) (Yeast) protein is Histone H3.3 (HHT3).